The sequence spans 849 residues: Rho guanine nucleotide exchange factor 15 (849 aa).

Disordered regions lie at residues 1–146, 159–202, and 277–308; these read MSAQ…ASAP, GAEG…NGTP, and LPPL…LPSE. Positions 18 to 31 are enriched in basic residues; sequence RIIRPRPPSRHRAP. Residues 48–59 are compositionally biased toward polar residues; it reads QISNDASASVCT. A compositionally biased stretch (low complexity) spans 65–110; it reads PPTASLKPPALLPPSVSRTSLDSQTSPDSPSSTPSPSPVSRRSISP. 2 positions are modified to phosphoserine: serine 107 and serine 109. Positions 111–123 are enriched in pro residues; the sequence is EPAPCSPVPPPKP. The segment covering 164-180 has biased composition (polar residues); that stretch reads AQSSDSLERCSQGSTEV. The residue at position 361 (tyrosine 361) is a Phosphotyrosine; by EPHB2. Residues 425–609 enclose the DH domain; the sequence is RMQESLFEVV…SKIIERCSAE (185 aa). 2 stretches are compositionally biased toward polar residues: residues 771–786 and 840–849; these read CSEP…QSLE and SSGTPDTPQP. Disordered stretches follow at residues 771–803 and 819–849; these read CSEP…GWLK and GEHE…TPQP.

Interacts with EPHA4. Interacts with EPHB2. Phosphorylated on tyrosine residues upon EFNA1 stimulation. EPHB2-dependent phosphorylation at Tyr-361 triggers UBE3A-mediated ubiquitination. In terms of processing, ubiquitinated; UBE3A-mediated ubiquitination and degradation by the proteasome promotes EFNB1-dependent synapse formation. In terms of tissue distribution, at P12, expressed is detected in the CA1 region and the dentate gyrus of the hippocampus.

The protein resides in the cell projection. Its subcellular location is the dendrite. In terms of biological role, specific GEF for RhoA activation. Does not activate RAC1 or CDC42. Regulates vascular smooth muscle contractility. Negatively regulates excitatory synapse development by suppressing the synapse-promoting activity of EPHB2. The protein is Rho guanine nucleotide exchange factor 15 (Arhgef15) of Mus musculus (Mouse).